A 154-amino-acid chain; its full sequence is Interleukin-2 (154 aa).

Positions 1 to 20 (MYRMQLLSCIALSLALITNS) are cleaved as a signal peptide. Threonine 23 is a glycosylation site (O-linked (GalNAc...) threonine). Cysteines 78 and 126 form a disulfide.

This sequence belongs to the IL-2 family.

It is found in the secreted. In terms of biological role, cytokine produced by activated CD4-positive helper T-cells and to a lesser extend activated CD8-positive T-cells and natural killer (NK) cells that plays pivotal roles in the immune response and tolerance. Binds to a receptor complex composed of either the high-affinity trimeric IL-2R (IL2RA/CD25, IL2RB/CD122 and IL2RG/CD132) or the low-affinity dimeric IL-2R (IL2RB and IL2RG). Interaction with the receptor leads to oligomerization and conformation changes in the IL-2R subunits resulting in downstream signaling starting with phosphorylation of JAK1 and JAK3. In turn, JAK1 and JAK3 phosphorylate the receptor to form a docking site leading to the phosphorylation of several substrates including STAT5. This process leads to activation of several pathways including STAT, phosphoinositide-3-kinase/PI3K and mitogen-activated protein kinase/MAPK pathways. Functions as a T-cell growth factor and can increase NK-cell cytolytic activity as well. Promotes strong proliferation of activated B-cells and subsequently immunoglobulin production. Plays a pivotal role in regulating the adaptive immune system by controlling the survival and proliferation of regulatory T-cells, which are required for the maintenance of immune tolerance. Moreover, participates in the differentiation and homeostasis of effector T-cell subsets, including Th1, Th2, Th17 as well as memory CD8-positive T-cells. The sequence is that of Interleukin-2 (IL2) from Papio hamadryas (Hamadryas baboon).